Here is a 601-residue protein sequence, read N- to C-terminus: Probable translation initiation factor IF-2 (601 aa).

A tr-type G domain is found at 10 to 227 (LRAPIVVVLG…VLAGLAQRYL (218 aa)). Residues 19-26 (GHVDAGKT) form a G1 region. 19–26 (GHVDAGKT) is a binding site for GTP. The segment at 44–48 (TMTQH) is G2. Residues 83-86 (DTPG) are G3. Residues 83–87 (DTPGH) and 137–140 (NKID) each bind GTP. The tract at residues 137 to 140 (NKID) is G4. Residues 205-207 (SAV) are G5.

This sequence belongs to the TRAFAC class translation factor GTPase superfamily. Classic translation factor GTPase family. IF-2 subfamily.

In terms of biological role, function in general translation initiation by promoting the binding of the formylmethionine-tRNA to ribosomes. Seems to function along with eIF-2. This chain is Probable translation initiation factor IF-2, found in Thermofilum pendens (strain DSM 2475 / Hrk 5).